We begin with the raw amino-acid sequence, 679 residues long: DNA-directed RNA polymerase subunit beta' (679 aa).

Zn(2+) contacts are provided by Cys-69, Cys-71, Cys-87, and Cys-90. Residues Asp-489, Asp-491, and Asp-493 each contribute to the Mg(2+) site.

Belongs to the RNA polymerase beta' chain family. RpoC1 subfamily. As to quaternary structure, in plastids the minimal PEP RNA polymerase catalytic core is composed of four subunits: alpha, beta, beta', and beta''. When a (nuclear-encoded) sigma factor is associated with the core the holoenzyme is formed, which can initiate transcription. The cofactor is Mg(2+). Zn(2+) serves as cofactor.

It is found in the plastid. It localises to the chloroplast. It catalyses the reaction RNA(n) + a ribonucleoside 5'-triphosphate = RNA(n+1) + diphosphate. Functionally, DNA-dependent RNA polymerase catalyzes the transcription of DNA into RNA using the four ribonucleoside triphosphates as substrates. This chain is DNA-directed RNA polymerase subunit beta', found in Phalaenopsis aphrodite subsp. formosana (Moth orchid).